A 101-amino-acid polypeptide reads, in one-letter code: Large ribosomal subunit protein uL24 (101 aa).

The protein belongs to the universal ribosomal protein uL24 family. In terms of assembly, part of the 50S ribosomal subunit.

In terms of biological role, one of two assembly initiator proteins, it binds directly to the 5'-end of the 23S rRNA, where it nucleates assembly of the 50S subunit. One of the proteins that surrounds the polypeptide exit tunnel on the outside of the subunit. The protein is Large ribosomal subunit protein uL24 of Jannaschia sp. (strain CCS1).